Here is an 84-residue protein sequence, read N- to C-terminus: Small ribosomal subunit protein uS17 (84 aa).

This sequence belongs to the universal ribosomal protein uS17 family. In terms of assembly, part of the 30S ribosomal subunit.

One of the primary rRNA binding proteins, it binds specifically to the 5'-end of 16S ribosomal RNA. This chain is Small ribosomal subunit protein uS17, found in Pectobacterium atrosepticum (strain SCRI 1043 / ATCC BAA-672) (Erwinia carotovora subsp. atroseptica).